Here is a 200-residue protein sequence, read N- to C-terminus: Rubrerythrin (200 aa).

Positions 12–155 (SIKGSKTEKH…ALLAHVEDGS (144 aa)) constitute a Ferritin-like diiron domain. Residues Glu-29, Glu-62, Glu-103, Glu-106, Glu-137, His-140, Cys-167, Cys-170, Cys-183, and Cys-186 each contribute to the Fe(3+) site. The region spanning 162–200 (EIAWQCRNCGYVITSKKAPKLCPACAHPQAYFEPMKTNY) is the Rubredoxin-like domain.

In terms of assembly, homodimer. Possesses two rubredoxin-like centers and two non-sulfur oxo-bridged di-iron centers per dimer. Fe(3+) is required as a cofactor.

It is found in the cytoplasm. In terms of biological role, may provide oxidative stress protection via catalytic reduction of intracellular hydrogen peroxide. The protein is Rubrerythrin (rbr) of Porphyromonas gingivalis (strain ATCC BAA-308 / W83).